The following is a 528-amino-acid chain: MAASDQHRSRRHDESSSRPNKKKKVSRNPETNLLFNLNSCSKSKDLSAALALYDAAITSSEVRLSQQHFQTLLYLCSASITDISLQYLAIDRGFEIFDRMVSSGISPNEASVTSVARLAAAKGNGDYAFKVVKEFVSVGGVSIPRLRTYAPALLCFCEKLEAEKGYEVEEHMEAAGIALEEAEISALLKVSAATGRENKVYRYLHKLREYVGCVSEETLKIIEEWFCGEKAGEVGDNGIGSDVGMLREAVLNNGGGWHGHGWVGEGKWTVKKGNVSSTGRCLSCSEQLACVDTNEVETQKFVDSLVALAMDRKTKMNSCETNVVFSEFQDWLEKHGDYEAIVDGANIGLYQQNFVDGSFSLSQLESVMKELYRESGNNKWPLILLHKRRVKTLLENPTHRNLVEEWISNGVLYATPPGSNDDWYWLYAAAKLKCLLVTNDEMRDHIFELLGSTFFQKWKERHQVRYTFVKGNLKLEMPSPFSVVIQESEKGSWHFPVSCENNEESSRTWMCISRQSILDSPKSNGKIP.

A compositionally biased stretch (basic and acidic residues) spans 1–16 (MAASDQHRSRRHDESS). A disordered region spans residues 1 to 28 (MAASDQHRSRRHDESSSRPNKKKKVSRN). PPR repeat units follow at residues 29–64 (PETNLLFNLNSCSKSKDLSAALALYDAAITSSEVRL), 72–107 (LLYLCSASITDISLQYLAIDRGFEIFDRMVSSGISP), 108–142 (NEASVTSVARLAAAKGNGDYAFKVVKEFVSVGGVS), and 145–179 (RLRTYAPALLCFCEKLEAEKGYEVEEHMEAAGIAL). A PRORP domain is found at 275–511 (VSSTGRCLSC…NEESSRTWMC (237 aa)). Positions 281 and 284 each coordinate Zn(2+). Residues Asp343, Asp421, Asp422, and Asp440 each contribute to the Mg(2+) site. Zn(2+) is bound by residues His494 and Cys511.

The protein belongs to the PPR family. P subfamily. Monomer; forms dimers in crystallo but monomers in solution. The cofactor is Mg(2+).

It is found in the nucleus. The catalysed reaction is Endonucleolytic cleavage of RNA, removing 5'-extranucleotides from tRNA precursor.. Functionally, endonuclease RNase P responsible for the 5' maturation of tRNA precursors. Preferentially binds precursor tRNAs containing short 5' leaders and 3' trailers. Also involved in the maturation of mRNA and small nucleolar RNA (snoRNA). In Arabidopsis thaliana (Mouse-ear cress), this protein is Proteinaceous RNase P 2 (PRORP2).